We begin with the raw amino-acid sequence, 436 residues long: MPIFIDRRLNPKDKSLGNRQRFLRRAREELKRSIRDKVRAGGIAELDREHVVPIPRKGTGEPTFGDDKESGRRQHILPGNRTFSSGDLIPKPGGGGGYGSAAGTTESEDDFRFVLSREEVLDLFFEDLELPDLVKLNLKQVLSFKPRRAGFAASGAPTNINVGRTMRNSHGRRIALRRPKQAELDAIARQIAELEAKPASALVRERIAALREALDRLERRRKRIAYVDPVDIRFNRFDPQPLPNANAVMFCLMDVSGSMGEREKDLAKRFFVLLHLFLTRRYERTDIVFIRHTHLAKEVDEHTFFYHTESGGTVVSTALEEMHRIIEQRYPVAEWNIYAAQASDGDNFAGDSERCIELLDRKLMRLCQYFAYVEIIDERESHIFGATENGTSLWRAYNAVDGKWPNFQMRRIAAPADIYPVFRQLFARQPDLRKSA.

The tract at residues 54-103 (IPRKGTGEPTFGDDKESGRRQHILPGNRTFSSGDLIPKPGGGGGYGSAAG) is disordered.

Belongs to the UPF0229 family.

In Mesorhizobium japonicum (strain LMG 29417 / CECT 9101 / MAFF 303099) (Mesorhizobium loti (strain MAFF 303099)), this protein is UPF0229 protein mll9637.